The sequence spans 430 residues: Histidinol dehydrogenase (430 aa).

S237, Q259, and H262 together coordinate substrate. Zn(2+) is bound by residues Q259 and H262. Residues E327 and H328 each act as proton acceptor in the active site. 4 residues coordinate substrate: H328, D361, E415, and H420. A Zn(2+)-binding site is contributed by D361. A Zn(2+)-binding site is contributed by H420.

The protein belongs to the histidinol dehydrogenase family. Zn(2+) is required as a cofactor.

The enzyme catalyses L-histidinol + 2 NAD(+) + H2O = L-histidine + 2 NADH + 3 H(+). The protein operates within amino-acid biosynthesis; L-histidine biosynthesis; L-histidine from 5-phospho-alpha-D-ribose 1-diphosphate: step 9/9. Catalyzes the sequential NAD-dependent oxidations of L-histidinol to L-histidinaldehyde and then to L-histidine. This is Histidinol dehydrogenase from Mesorhizobium japonicum (strain LMG 29417 / CECT 9101 / MAFF 303099) (Mesorhizobium loti (strain MAFF 303099)).